The following is an 878-amino-acid chain: Alanine--tRNA ligase (878 aa).

Zn(2+)-binding residues include histidine 568, histidine 572, cysteine 670, and histidine 674.

It belongs to the class-II aminoacyl-tRNA synthetase family. The cofactor is Zn(2+).

It is found in the cytoplasm. The enzyme catalyses tRNA(Ala) + L-alanine + ATP = L-alanyl-tRNA(Ala) + AMP + diphosphate. Catalyzes the attachment of alanine to tRNA(Ala) in a two-step reaction: alanine is first activated by ATP to form Ala-AMP and then transferred to the acceptor end of tRNA(Ala). Also edits incorrectly charged Ser-tRNA(Ala) and Gly-tRNA(Ala) via its editing domain. In Latilactobacillus sakei subsp. sakei (strain 23K) (Lactobacillus sakei subsp. sakei), this protein is Alanine--tRNA ligase.